Reading from the N-terminus, the 302-residue chain is MPQKRLQMLRGLIELVRPHNLVVAALTTLIGYGTVASIYGGDIVSSGYAYAALIVVLVAAGGYVINDYYDIETDMVAKPWRPIVSGRVSPGAARFYAYMLFTIGLIIALVTCPNFIVFGFAVLNALLVHEYSRWIKRTGLPGNIVIAFNSASTIVFGALYASCMIKGKVVLPSVALIPVLYAFLLVLGREFVKGIEDVKGDAIAGIGTLAVRFGVRTAYMASVAVLGLVVVLSPFPYISGVYNMAYLILALVVDVLIAYSLAILGRGVARGLEDAIRASRRARSALKLAFMVGALAFLAGLM.

The next 8 helical transmembrane spans lie at 21-41 (LVVA…IYGG), 43-63 (IVSS…AGGY), 103-123 (IGLI…FAVL), 144-164 (IVIA…ASCM), 167-187 (GKVV…LLVL), 218-238 (AYMA…FPYI), 244-264 (MAYL…LAIL), and 282-302 (ARSA…AGLM).

The protein belongs to the UbiA prenyltransferase family. DGGGP synthase subfamily. Mg(2+) serves as cofactor.

It is found in the cell membrane. The enzyme catalyses sn-3-O-(geranylgeranyl)glycerol 1-phosphate + (2E,6E,10E)-geranylgeranyl diphosphate = 2,3-bis-O-(geranylgeranyl)-sn-glycerol 1-phosphate + diphosphate. It functions in the pathway membrane lipid metabolism; glycerophospholipid metabolism. Its function is as follows. Prenyltransferase that catalyzes the transfer of the geranylgeranyl moiety of geranylgeranyl diphosphate (GGPP) to the C2 hydroxyl of (S)-3-O-geranylgeranylglyceryl phosphate (GGGP). This reaction is the second ether-bond-formation step in the biosynthesis of archaeal membrane lipids. This chain is Digeranylgeranylglyceryl phosphate synthase, found in Hyperthermus butylicus (strain DSM 5456 / JCM 9403 / PLM1-5).